Reading from the N-terminus, the 174-residue chain is Transgelin (174 aa).

The Calponin-homology (CH) domain occupies 3–109 (SQLEKEAREW…SIHSFSRYAA (107 aa)).

As to quaternary structure, binds to actin.

It localises to the cytoplasm. Functionally, has actin-binding and actin-bundling activity and is a component of the actin patch. Stabilizes actin filaments against disassembly. Cross-links F-actin and is required for the formation of the contractile F-actin ring. This is Transgelin (stg1) from Schizosaccharomyces pombe (strain 972 / ATCC 24843) (Fission yeast).